We begin with the raw amino-acid sequence, 924 residues long: MPSTYSDDNTLRSGLDRFRDHSPSQHRRSMSQETDSTVSTTSIVFDRIQERLDTKEFPARGTDGDDNDSLKDELNNDDLETGPFLGNASPSSRSNQRSSADGQRMDRSLRRWLFIVSGALVATWVIGLIFFVSSKAYKPSSSFAHDPQATVTHGSGKKVTLDQVLNNEWRAKSHSISWIAGVNGEDGLLLEKEGANKDYLVVEDVRAQNPSSVEASKSKTLIKDKLFEFANKTYWPTVTVPSRDLKKVLLATDVQNNWRHSYYAVYWIFDVETQQAEPLVPYDADARLQLASWSPTSDAIVYTRDNNMFLRKLDSDKIVQITRDGSADVFNGVPDWVYEEEVLASGVATWWSEDGNYVAFLRTNETGVPEYPIQYFVSRPSGEEPKPGEENYPEVRQIKYPKAGAHNPIVDLKFYDVKRGDVFSVDISGRFADDDRLITEVIWAGKQVLIKETNRVSDVMRVVLVDVGSRTGKAVRTVDVNDIDGGWFEISHKTKFIPADPANGRPDDGYVDTIIHNNGDHLAYFTPLDNPNPIMLTSGDYEVVDAPSAVDLQRNLVYFVSTKESSIQRHVYQVKLTGEDMTPVTDTSKEGYYAISFSTGAGYALVSYQGPNIPWQKVISTPSNPDKYEHVVEENKDLAEAAKKHELPINIYGTINVDGVELNYIERRPPHFDKNKKYPVLFQQYSGPVSQTVKKTFAVDFQSFVAAGLGYICVTVDGRGTGFIGRKNRVIIRGNLGTWESHDQIAAAKHWAQKDYIDEDRLAIWGWSYGGYMTLKTLEQDAGQTFKYGMAVAPVTDWRFYDSIYTERYMRTPQTNPEGYESAAVTNVTALSQNVRFLLMHGVADDNVHMQNSLTLLDALDQRSVENYDVQVFPDSDHGIYFHNANRIVFDKLTNWLVNAFNGEWLKIANAQPNGMKRRALPTA.

A compositionally biased stretch (polar residues) spans 1-12; it reads MPSTYSDDNTLR. The disordered stretch occupies residues 1–102; that stretch reads MPSTYSDDNT…RSNQRSSADG (102 aa). The Cytoplasmic segment spans residues 1 to 111; it reads MPSTYSDDNT…GQRMDRSLRR (111 aa). Residues 14–23 are compositionally biased toward basic and acidic residues; it reads GLDRFRDHSP. Residues 31-43 are compositionally biased toward polar residues; the sequence is SQETDSTVSTTSI. The segment covering 47-58 has biased composition (basic and acidic residues); the sequence is RIQERLDTKEFP. The segment covering 87–100 has biased composition (low complexity); that stretch reads NASPSSRSNQRSSA. Residues 112-132 form a helical; Signal-anchor for type II membrane protein membrane-spanning segment; sequence WLFIVSGALVATWVIGLIFFV. The Vacuolar segment spans residues 133-924; sequence SSKAYKPSSS…GMKRRALPTA (792 aa). N-linked (GlcNAc...) asparagine glycosylation is found at asparagine 231 and asparagine 364. Serine 768 functions as the Charge relay system in the catalytic mechanism. The N-linked (GlcNAc...) asparagine glycan is linked to asparagine 827. Catalysis depends on charge relay system residues aspartate 845 and histidine 878.

Belongs to the peptidase S9B family.

The protein localises to the vacuole membrane. The catalysed reaction is Release of an N-terminal dipeptide, Xaa-Yaa-|-Zaa-, from a polypeptide, preferentially when Yaa is Pro, provided Zaa is neither Pro nor hydroxyproline.. Functionally, type IV dipeptidyl-peptidase which removes N-terminal dipeptides sequentially from polypeptides having unsubstituted N-termini provided that the penultimate residue is proline. The protein is Probable dipeptidyl-aminopeptidase B (dapB) of Neurospora crassa (strain ATCC 24698 / 74-OR23-1A / CBS 708.71 / DSM 1257 / FGSC 987).